The chain runs to 428 residues: Histone deacetylase 3 (428 aa).

Residues 3 to 316 (KTVAYFYDPD…WTYETSLLVE (314 aa)) form a histone deacetylase region. 3 residues coordinate 1D-myo-inositol 1,4,5,6-tetrakisphosphate: His17, Gly21, and Lys25. His135 is an active-site residue. Zn(2+)-binding residues include Asp170, His172, and Asp259. Arg265 is a binding site for 1D-myo-inositol 1,4,5,6-tetrakisphosphate. Composition is skewed to basic and acidic residues over residues 388-405 (DRTDEADAEERGPEENYS) and 415-428 (DGDHDNDKESDVEI). The tract at residues 388-428 (DRTDEADAEERGPEENYSRPEAPNEFYDGDHDNDKESDVEI) is disordered. Ser424 is modified (phosphoserine).

This sequence belongs to the histone deacetylase family. HD type 1 subfamily. Interacts with HDAC7 and HDAC9. Interacts with HDAC10, DAXX and DACH1. Found in a complex with NCOR1 and NCOR2. Component of the N-Cor repressor complex, at least composed of NCOR1, NCOR2, HDAC3, TBL1X, TBL1R, CORO2A and GPS2. Interacts with BCOR, MJD2A/JHDM3A, NRIP1, PRDM6 and SRY. Interacts with BTBD14B. Interacts with GLIS2. Interacts (via the DNA-binding domain) with NR2C1; the interaction recruits phosphorylated NR2C1 to PML bodies for sumoylation. Component of the Notch corepressor complex. Interacts with CBFA2T3 and NKAP. Interacts with APEX1; the interaction is not dependent on the acetylated status of APEX1. Interacts with and deacetylates MAPK14. Interacts with ZMYND15. Interacts with SMRT/NCOR2 and BCL6 on DNA enhancer elements. Interacts with INSM1. Interacts with XBP1; the interaction occurs in endothelial cell (EC) under disturbed flow. Interacts (via C-terminus) with CCAR2 (via N-terminus). Interacts with and deacetylates MEF2D. Interacts with BEND3. Interacts with NKAPL. Interacts with DHX36; this interaction occurs in a RNA-dependent manner. Interacts weakly with CRY1; this interaction is enhanced in the presence of FBXL3. Interacts with FBXL3 and BMAL1. Interacts with NCOR1. Interacts with RARA. Interacts with SETD5. In terms of processing, deubiquitinated on 'Lys-63'-linked ubiquitin chains by USP38; leading to a decreased level of histone acetylation. Sumoylated in vitro.

The protein resides in the nucleus. Its subcellular location is the chromosome. The protein localises to the cytoplasm. It is found in the cytosol. The catalysed reaction is N(6)-acetyl-L-lysyl-[histone] + H2O = L-lysyl-[histone] + acetate. It catalyses the reaction N(6)-acetyl-L-lysyl-[protein] + H2O = L-lysyl-[protein] + acetate. It carries out the reaction N(6)-(2E)-butenoyl-L-lysyl-[protein] + H2O = (2E)-2-butenoate + L-lysyl-[protein]. The enzyme catalyses N(6)-(2-hydroxyisobutanoyl)-L-lysyl-[protein] + H2O = 2-hydroxy-2-methylpropanoate + L-lysyl-[protein]. The catalysed reaction is N(6)-[(S)-lactoyl]-L-lysyl-[protein] + H2O = (S)-lactate + L-lysyl-[protein]. With respect to regulation, inositol tetraphosphate (1D-myo-inositol 1,4,5,6-tetrakisphosphate) promotes the histone deacetylase activity by acting as an intermolecular glue between HDAC3 and NCOR2, thereby promoting its association with the N-Cor complex, a prerequisite for the histone deacetylase activity. Functionally, histone deacetylase that catalyzes the deacetylation of lysine residues on the N-terminal part of the core histones (H2A, H2B, H3 and H4), and some other non-histone substrates. Histone deacetylation gives a tag for epigenetic repression and plays an important role in transcriptional regulation, cell cycle progression and developmental events. Histone deacetylases act via the formation of large multiprotein complexes, such as N-Cor repressor complex, which activate the histone deacetylase activity. Participates in the BCL6 transcriptional repressor activity by deacetylating the H3 'Lys-27' (H3K27) on enhancer elements, antagonizing EP300 acetyltransferase activity and repressing proximal gene expression. Acts as a molecular chaperone for shuttling phosphorylated NR2C1 to PML bodies for sumoylation. Contributes, together with XBP1 isoform 1, to the activation of NFE2L2-mediated HMOX1 transcription factor gene expression in a PI(3)K/mTORC2/Akt-dependent signaling pathway leading to endothelial cell (EC) survival under disturbed flow/oxidative stress. Regulates both the transcriptional activation and repression phases of the circadian clock in a deacetylase activity-independent manner. During the activation phase, promotes the accumulation of ubiquitinated BMAL1 at the E-boxes and during the repression phase, blocks FBXL3-mediated CRY1/2 ubiquitination and promotes the interaction of CRY1 and BMAL1. The NCOR1-HDAC3 complex regulates the circadian expression of the core clock gene BMAL1 and the genes involved in lipid metabolism in the liver. Also functions as a deacetylase for non-histone targets, such as KAT5, MEF2D, MAPK14, RARA and STAT3. Serves as a corepressor of RARA, mediating its deacetylation and repression, leading to inhibition of RARE DNA element binding. In association with RARA, plays a role in the repression of microRNA-10a and thereby in the inflammatory response. In addition to protein deacetylase activity, also acts as a protein-lysine deacylase by recognizing other acyl groups: catalyzes removal of (2E)-butenoyl (crotonyl), lactoyl (lactyl) and 2-hydroxyisobutanoyl (2-hydroxyisobutyryl) acyl groups from lysine residues, leading to protein decrotonylation, delactylation and de-2-hydroxyisobutyrylation, respectively. Catalyzes decrotonylation of MAPRE1/EB1. Mediates delactylation NBN/NBS1, thereby inhibiting DNA double-strand breaks (DSBs) via homologous recombination (HR). This is Histone deacetylase 3 (HDAC3) from Pongo abelii (Sumatran orangutan).